A 277-amino-acid polypeptide reads, in one-letter code: 2-dehydro-3-deoxyphosphooctonate aldolase (277 aa).

Belongs to the KdsA family.

The protein resides in the cytoplasm. The catalysed reaction is D-arabinose 5-phosphate + phosphoenolpyruvate + H2O = 3-deoxy-alpha-D-manno-2-octulosonate-8-phosphate + phosphate. It functions in the pathway carbohydrate biosynthesis; 3-deoxy-D-manno-octulosonate biosynthesis; 3-deoxy-D-manno-octulosonate from D-ribulose 5-phosphate: step 2/3. It participates in bacterial outer membrane biogenesis; lipopolysaccharide biosynthesis. This Brucella melitensis biotype 2 (strain ATCC 23457) protein is 2-dehydro-3-deoxyphosphooctonate aldolase.